A 156-amino-acid chain; its full sequence is uncharacterized protein (156 aa).

Disordered stretches follow at residues 22-64 and 81-156; these read KERV…VLKK and AARA…DENE. The segment covering 43 to 56 has biased composition (acidic residues); that stretch reads PEEDGDHSDKEDEQ. The residue at position 50 (S50) is a Phosphoserine. Position 108 is an N6-acetyllysine (K108). The segment covering 121 to 134 has biased composition (basic and acidic residues); that stretch reads TKEEDEINKQDSVK. S148 is modified (phosphoserine).

This is an uncharacterized protein from Bos taurus (Bovine).